Reading from the N-terminus, the 267-residue chain is Hydroxynaphthalene reductase-like protein Arp2 (267 aa).

Residues I25, N45, D71, and N98 each contribute to the NADP(+) site. Active-site proton donor residues include S147 and S148. The NADP(+) site is built by Y162, K166, V195, and T197. Y162 (proton acceptor) is an active-site residue. Residue K166 is the Lowers pKa of active site Tyr of the active site.

It belongs to the short-chain dehydrogenases/reductases (SDR) family.

In terms of biological role, hydroxynaphthalene reductase-like protein; part of the Pks2 gene cluster that mediates the formation of infectious structures (appressoria), enabling these fungi to kill insects faster. The product of the Pks2 gene cluster is different from the one of Pks1 and has still not been identified. The sequence is that of Hydroxynaphthalene reductase-like protein Arp2 from Metarhizium anisopliae (strain ARSEF 549).